The sequence spans 331 residues: Lipoyl synthase (331 aa).

A disordered region spans residues 1 to 33; sequence MSDALIATSSEAPQSPAEQYDPTRKQKSADKTA. A compositionally biased stretch (polar residues) spans 7-17; sequence ATSSEAPQSPA. Over residues 21–33 the composition is skewed to basic and acidic residues; the sequence is DPTRKQKSADKTA. Residues cysteine 78, cysteine 83, cysteine 89, cysteine 104, cysteine 108, cysteine 111, and serine 318 each coordinate [4Fe-4S] cluster. In terms of domain architecture, Radical SAM core spans 89 to 307; the sequence is CFGKGTATFM…EEEAYKMGFT (219 aa).

Belongs to the radical SAM superfamily. Lipoyl synthase family. The cofactor is [4Fe-4S] cluster.

Its subcellular location is the cytoplasm. The catalysed reaction is [[Fe-S] cluster scaffold protein carrying a second [4Fe-4S](2+) cluster] + N(6)-octanoyl-L-lysyl-[protein] + 2 oxidized [2Fe-2S]-[ferredoxin] + 2 S-adenosyl-L-methionine + 4 H(+) = [[Fe-S] cluster scaffold protein] + N(6)-[(R)-dihydrolipoyl]-L-lysyl-[protein] + 4 Fe(3+) + 2 hydrogen sulfide + 2 5'-deoxyadenosine + 2 L-methionine + 2 reduced [2Fe-2S]-[ferredoxin]. It functions in the pathway protein modification; protein lipoylation via endogenous pathway; protein N(6)-(lipoyl)lysine from octanoyl-[acyl-carrier-protein]: step 2/2. Its function is as follows. Catalyzes the radical-mediated insertion of two sulfur atoms into the C-6 and C-8 positions of the octanoyl moiety bound to the lipoyl domains of lipoate-dependent enzymes, thereby converting the octanoylated domains into lipoylated derivatives. The polypeptide is Lipoyl synthase (Cupriavidus necator (strain ATCC 17699 / DSM 428 / KCTC 22496 / NCIMB 10442 / H16 / Stanier 337) (Ralstonia eutropha)).